Here is an 865-residue protein sequence, read N- to C-terminus: FO synthase (865 aa).

A disordered region spans residues 1 to 21 (MIEGVTELATPNVPPAPPSPS). 2 consecutive Radical SAM core domains span residues 76–320 (ITYS…LGPD) and 544–785 (VTYV…DNIQ). Positions 77–409 (TYSRNVFIPL…PRIGAHVAAL (333 aa)) are cofG-like. [4Fe-4S] cluster contacts are provided by Cys90, Cys94, Cys97, Cys558, Cys562, and Cys565. The interval 521–854 (DGAELDAVAA…RERTTVYGRV (334 aa)) is cofH-like.

It in the N-terminal section; belongs to the radical SAM superfamily. CofG family. The protein in the C-terminal section; belongs to the radical SAM superfamily. CofH family. Requires [4Fe-4S] cluster as cofactor.

It carries out the reaction 5-amino-6-(D-ribitylamino)uracil + L-tyrosine + S-adenosyl-L-methionine = 5-amino-5-(4-hydroxybenzyl)-6-(D-ribitylimino)-5,6-dihydrouracil + 2-iminoacetate + 5'-deoxyadenosine + L-methionine + H(+). It catalyses the reaction 5-amino-5-(4-hydroxybenzyl)-6-(D-ribitylimino)-5,6-dihydrouracil + S-adenosyl-L-methionine = 7,8-didemethyl-8-hydroxy-5-deazariboflavin + 5'-deoxyadenosine + L-methionine + NH4(+) + H(+). It participates in cofactor biosynthesis; coenzyme F0 biosynthesis. In terms of biological role, catalyzes the radical-mediated synthesis of 7,8-didemethyl-8-hydroxy-5-deazariboflavin (FO) from 5-amino-6-(D-ribitylamino)uracil and L-tyrosine. The sequence is that of FO synthase (fbiC) from Nocardia farcinica (strain IFM 10152).